A 460-amino-acid chain; its full sequence is Ammonium transporter Rh type B-A (460 aa).

The Cytoplasmic portion of the chain corresponds to 1 to 10; sequence MTGYSTNMRI. The chain crosses the membrane as a helical span at residues 11–31; it reads KLPLFCLILQFITIILFAVFV. Topologically, residues 32–62 are extracellular; it reads RYDHESDARGWHDELKNHSTANADNDFYFRY. Residue N48 is glycosylated (N-linked (GlcNAc...) asparagine). Residues 63-83 form a helical membrane-spanning segment; it reads PSFQDVHVMIFIGFGFLMTFL. At 84 to 87 the chain is on the cytoplasmic side; sequence KRYG. A helical membrane pass occupies residues 88–108; the sequence is FSSVAFNFLIAAFGLQWSTLI. At 109–125 the chain is on the extracellular side; that stretch reads QGFFHGFHDGKIHVGIE. The chain crosses the membrane as a helical span at residues 126-146; that stretch reads SMINADFCTGAVLISFGAVLG. At 147-150 the chain is on the cytoplasmic side; that stretch reads KTSP. A helical membrane pass occupies residues 151 to 171; sequence VQLIVMTLIEVTLFGINEYII. The Extracellular portion of the chain corresponds to 172-179; the sequence is LNIVGAKD. A helical membrane pass occupies residues 180 to 202; that stretch reads AGGSMTIHTFGAYFGLIVSRVLY. At 203–220 the chain is on the cytoplasmic side; that stretch reads RADLDKSRQREGSVYHSD. The chain crosses the membrane as a helical span at residues 221–241; it reads LFAMIGTIYLWMFWPSFNSAV. Residues 242–252 lie on the Extracellular side of the membrane; it reads TAHGDDQHRTV. The chain crosses the membrane as a helical span at residues 253 to 273; the sequence is LNTYYSLAACTLATFGFSALL. The Cytoplasmic segment spans residues 274-283; sequence NGEGKLDMVH. A helical membrane pass occupies residues 284 to 304; it reads IQNAALAGGVAVGTSGEMMLT. P305 is a topological domain (extracellular). Residues 306–326 form a helical membrane-spanning segment; it reads FGAMIAGTLAGIVSVLGYKYL. The Cytoplasmic segment spans residues 327–347; the sequence is TPVLDSKLKIQDTCGVHNLHG. The chain crosses the membrane as a helical span at residues 348 to 368; it reads MPGILGAVIGAIVALFATADI. The Extracellular portion of the chain corresponds to 369 to 394; sequence YGDGMDDVFPMIFDGSRTAKQQSLYQ. The chain crosses the membrane as a helical span at residues 395–415; sequence FLALLVALGFAIVGGTVVGFI. Residues 416 to 460 are Cytoplasmic-facing; sequence LKLPLFGTPSDAECFEDAVYWEVPGGEGHQQLTVVVNNEDPDTQA.

The protein belongs to the ammonium transporter (TC 2.A.49) family. Rh subfamily.

Its subcellular location is the basolateral cell membrane. The protein resides in the cytoplasmic vesicle membrane. Its function is as follows. Functions as a specific ammonium transporter. This chain is Ammonium transporter Rh type B-A (rhbg-a), found in Xenopus laevis (African clawed frog).